We begin with the raw amino-acid sequence, 341 residues long: Holliday junction branch migration complex subunit RuvB (341 aa).

Residues 1–21 (MSQPDPMLRPEPLESDGEDRA) form a disordered region. Residues 4–183 (PDPMLRPEPL…FGIPTRLQFY (180 aa)) form a large ATPase domain (RuvB-L) region. ATP contacts are provided by residues L22, R23, G64, K67, T68, T69, 130-132 (EDF), R173, Y183, and R220. Residue T68 coordinates Mg(2+). The interval 184–254 (TIEELDLIVT…IADSALTRLG (71 aa)) is small ATPAse domain (RuvB-S). Residues 257–341 (HLGLDTADRR…PRTQESLFDE (85 aa)) form a head domain (RuvB-H) region. DNA contacts are provided by R293, R312, and R317.

Belongs to the RuvB family. Homohexamer. Forms an RuvA(8)-RuvB(12)-Holliday junction (HJ) complex. HJ DNA is sandwiched between 2 RuvA tetramers; dsDNA enters through RuvA and exits via RuvB. An RuvB hexamer assembles on each DNA strand where it exits the tetramer. Each RuvB hexamer is contacted by two RuvA subunits (via domain III) on 2 adjacent RuvB subunits; this complex drives branch migration. In the full resolvosome a probable DNA-RuvA(4)-RuvB(12)-RuvC(2) complex forms which resolves the HJ.

The protein resides in the cytoplasm. The catalysed reaction is ATP + H2O = ADP + phosphate + H(+). The RuvA-RuvB-RuvC complex processes Holliday junction (HJ) DNA during genetic recombination and DNA repair, while the RuvA-RuvB complex plays an important role in the rescue of blocked DNA replication forks via replication fork reversal (RFR). RuvA specifically binds to HJ cruciform DNA, conferring on it an open structure. The RuvB hexamer acts as an ATP-dependent pump, pulling dsDNA into and through the RuvAB complex. RuvB forms 2 homohexamers on either side of HJ DNA bound by 1 or 2 RuvA tetramers; 4 subunits per hexamer contact DNA at a time. Coordinated motions by a converter formed by DNA-disengaged RuvB subunits stimulates ATP hydrolysis and nucleotide exchange. Immobilization of the converter enables RuvB to convert the ATP-contained energy into a lever motion, pulling 2 nucleotides of DNA out of the RuvA tetramer per ATP hydrolyzed, thus driving DNA branch migration. The RuvB motors rotate together with the DNA substrate, which together with the progressing nucleotide cycle form the mechanistic basis for DNA recombination by continuous HJ branch migration. Branch migration allows RuvC to scan DNA until it finds its consensus sequence, where it cleaves and resolves cruciform DNA. This is Holliday junction branch migration complex subunit RuvB from Paracoccus denitrificans (strain Pd 1222).